The sequence spans 1785 residues: Plexin-2 (1785 aa).

A signal peptide spans 1–17 (MLPESVFLLLISHFLRA). The region spanning 18–444 (VTQPPFETEG…MPYGIILEEL (427 aa)) is the Sema domain. Residues 18-1139 (VTQPPFETEG…SDHALPSRLS (1122 aa)) are Extracellular-facing. Asn66 carries an N-linked (GlcNAc...) asparagine glycan. Disulfide bonds link Cys84–Cys91, Cys118–Cys126, Cys247–Cys349, Cys263–Cys300, Cys318–Cys336, Cys447–Cys464, Cys453–Cys487, Cys456–Cys473, and Cys467–Cys479. N-linked (GlcNAc...) asparagine glycosylation occurs at Asn249. The region spanning 446 to 488 (TCSHHSSCTECLVSVDPLCQWCHPTQSCTTSARCTSPVTSQCP) is the PSI 1 domain. Asn502, Asn536, and Asn572 each carry an N-linked (GlcNAc...) asparagine glycan. The cysteines at positions 524 and 544 are disulfide-linked. In terms of domain architecture, PSI 2 spans 577–617 (DCSGYGTCSSCMSSEYNCAWCSGLHKCSNSCGALEKSKACV). N-linked (GlcNAc...) asparagine glycosylation is found at Asn679 and Asn702. Residues 707 to 748 (SCTNLASDCSSCLALSPSLSCGWCNRQCSHECHESKATAVCD) form the PSI 3 domain. 3 consecutive IPT/TIG domains span residues 750–837 (PRID…LYSF), 840–924 (TSIF…PFEY), and 928–1040 (PSIS…LSPF). 4 N-linked (GlcNAc...) asparagine glycosylation sites follow: Asn864, Asn886, Asn984, and Asn1016. A helical membrane pass occupies residues 1140–1160 (LLILGLLLFIVVTLTVMCLVF). Residues 1159–1197 (VFKRRRQEREKEYRKIQLQMENLENNVRKECKQAFAELQ) are a coiled coil. Residues 1161–1785 (KRRRQEREKE…HIYSTISDYE (625 aa)) lie on the Cytoplasmic side of the membrane.

It belongs to the plexin family. As to quaternary structure, interacts with mab-20. In terms of tissue distribution, expressed predominantly in the central nervous system from embryonic to adult stages. Expressed in early embryos in ventral neuroblasts. Expressed in neurons and in a subset of posterior lateral and ventral epidermal cells following epidermal enclosure. Present in neurons, muscles and weakly expressed in epidermal cells of the larval tail.

It is found in the cell membrane. Its function is as follows. Involved as a receptor for mab-20/sema-2a in the formation or stabilization of cell-cell contacts at several stages of epithelial morphogenesis. In early embryonic development, required for proper ventral closure of the epidermis. During male tail morphogenesis, involved in precursor cell sorting and in the formation of distinct sensory rays. Involved in axon guidance of SDQL neurons during neurogenesis. Probably in response to stimulation by mab-20, regulates fln-1-mediated remodeling of the actin cytoskeleton and thus axon guidance and/or fasciculation of DD/VD neurons. The chain is Plexin-2 from Caenorhabditis elegans.